The sequence spans 216 residues: Adenylate kinase (216 aa).

Position 10 to 15 (10 to 15 (GAGKGT)) interacts with ATP. Residues 30 to 59 (STGDMLRAAVGVGTEVGKRAKAVMDAGKLV) are NMP. AMP-binding positions include Thr31, Arg36, 57 to 59 (KLV), 85 to 88 (GFPR), and Gln92. Positions 126 to 163 (GRYTCAQCGTVYHDTDKVPVEEGVCDKCGSTHFKRRPD) are LID. Arg127 is an ATP binding site. 2 residues coordinate Zn(2+): Cys130 and Cys133. 136–137 (VY) contributes to the ATP binding site. 2 residues coordinate Zn(2+): Cys150 and Cys153. Positions 160 and 172 each coordinate AMP. Residue Ala200 coordinates ATP.

Belongs to the adenylate kinase family. In terms of assembly, monomer.

Its subcellular location is the cytoplasm. It carries out the reaction AMP + ATP = 2 ADP. Its pathway is purine metabolism; AMP biosynthesis via salvage pathway; AMP from ADP: step 1/1. Its function is as follows. Catalyzes the reversible transfer of the terminal phosphate group between ATP and AMP. Plays an important role in cellular energy homeostasis and in adenine nucleotide metabolism. This Rhizobium etli (strain CIAT 652) protein is Adenylate kinase.